A 522-amino-acid chain; its full sequence is Terpineol synthase, chloroplastic (522 aa).

The (2E)-geranyl diphosphate site is built by Arg-242, Asp-279, Asp-283, Arg-414, and Asn-417. Mg(2+)-binding residues include Asp-279 and Asp-283. Positions 279–283 match the DDXXD motif motif; the sequence is DDVYD. Residues Asn-417, Thr-421, and Glu-425 each contribute to the Mg(2+) site.

This sequence belongs to the terpene synthase family. Tpsb subfamily. As to quaternary structure, monomer. It depends on Mg(2+) as a cofactor. The cofactor is Mn(2+). Confined to flowers.

It localises to the plastid. Its subcellular location is the chloroplast. It catalyses the reaction (2E)-geranyl diphosphate + H2O = (S)-alpha-terpineol + diphosphate. The enzyme catalyses (2E)-geranyl diphosphate = sabinene + diphosphate. It carries out the reaction (2E)-geranyl diphosphate = beta-myrcene + diphosphate. The catalysed reaction is (2E)-geranyl diphosphate = limonene + diphosphate. It catalyses the reaction (2E)-geranyl diphosphate + H2O = 1,8-cineole + diphosphate. The enzyme catalyses (2E)-geranyl diphosphate = alpha-pinene + diphosphate. The protein operates within secondary metabolite biosynthesis; terpenoid biosynthesis. Functionally, monoterpene synthase (TPS) involved in the biosynthesis of monoterpene natural products of the 'cineole cassette', volatile compounds present in floral scent. Catalyzes the conversion of (2E)-geranyl diphosphate (GPP) into alpha-terpineol and, as minor products, sabinene, beta-myrcene, limonene, alpha-pinene and 1,8-cineole. In Nicotiana langsdorffii (Langsdorff's tobacco), this protein is Terpineol synthase, chloroplastic.